Reading from the N-terminus, the 250-residue chain is Leucyl/phenylalanyl-tRNA--protein transferase (250 aa).

This sequence belongs to the L/F-transferase family.

It localises to the cytoplasm. The catalysed reaction is N-terminal L-lysyl-[protein] + L-leucyl-tRNA(Leu) = N-terminal L-leucyl-L-lysyl-[protein] + tRNA(Leu) + H(+). The enzyme catalyses N-terminal L-arginyl-[protein] + L-leucyl-tRNA(Leu) = N-terminal L-leucyl-L-arginyl-[protein] + tRNA(Leu) + H(+). It catalyses the reaction L-phenylalanyl-tRNA(Phe) + an N-terminal L-alpha-aminoacyl-[protein] = an N-terminal L-phenylalanyl-L-alpha-aminoacyl-[protein] + tRNA(Phe). In terms of biological role, functions in the N-end rule pathway of protein degradation where it conjugates Leu, Phe and, less efficiently, Met from aminoacyl-tRNAs to the N-termini of proteins containing an N-terminal arginine or lysine. The sequence is that of Leucyl/phenylalanyl-tRNA--protein transferase from Bordetella avium (strain 197N).